The following is a 24-amino-acid chain: TPDHREVPSFSSRWEPNFGLTFSK.

It belongs to the attacin/sarcotoxin-2 family.

It localises to the secreted. Hemolymph antibacterial protein. The protein is Attacin of Heliothis virescens (Tobacco budworm moth).